A 643-amino-acid polypeptide reads, in one-letter code: MKRFYGGLLVVSMCMFLTVYRYVDLNTPVEKPYITAAASVVVTPNTTLPMEWLRITLPDFMKEARNTQEAISGDDIAVVSGLFVEQNVSKEEREPLLTWNRLESLVDNAQSLVNGVDAIKEAGIVWESLVSAVEAKKLVDVNENQTRKGKEELCPQFLSKMNATEADGSSLKLQIPCGLTQGSSITVIGIPDGLVGSFRIDLTGQPLPGEPDPPIIVHYNVRLLGDKSTEDPVIVQNSWTASQDWGAEERCPKFDPDMNKKVDDLDECNKMVGGEINRTSSTSLQSNTSRGVPVAREASKHEKYFPFKQGFLSVATLRVGTEGMQMTVDGKHITSFAFRDTLEPWLVSEIRITGDFRLISILASGLPTSEESEHVVDLEALKSPTLSPLRPLDLVIGVFSTANNFKRRMAVRRTWMQYDDVRSGRVAVRFFVGLHKSPLVNLELWNEARTYGDVQLMPFVDYYSLISWKTLAICIFGTEVDSAKFIMKTDDDAFVRVDEVLLSLSMTNNTRGLIYGLINSDSQPIRNPDSKWYISYEEWPEEKYPPWAHGPGYIVSRDIAESVGKLFKEGNLKMFKLEDVAMGIWIAELTKHGLEPHYENDGRIISDGCKDGYVVAHYQSPAEMTCLWRKYQETKRSLCCREW.

The Cytoplasmic portion of the chain corresponds to 1-6; that stretch reads MKRFYG. Residues 7 to 23 traverse the membrane as a helical; Signal-anchor for type II membrane protein segment; it reads GLLVVSMCMFLTVYRYV. Residues 24 to 643 are Lumenal-facing; sequence DLNTPVEKPY…TKRSLCCREW (620 aa). N-linked (GlcNAc...) asparagine glycans are attached at residues Asn-45, Asn-87, Asn-144, Asn-162, Asn-277, Asn-287, and Asn-508. The region spanning 171–364 is the Galectin domain; that stretch reads LKLQIPCGLT…DFRLISILAS (194 aa).

It belongs to the glycosyltransferase 31 family. Interacts with GMII. Requires Mn(2+) as cofactor. Expressed in stems and siliques.

The protein resides in the golgi apparatus membrane. It participates in protein modification; protein glycosylation. Its function is as follows. Beta-1,3-galactosyltransferase that transfers galactose from UDP-galactose to substrates with a terminal beta-N-acetylglucosamine (beta-GlcNAc) residue. Involved in the biosynthesis of N-glycans containing Lewis a structures (with the combination of FUT13). The protein is Beta-1,3-galactosyltransferase GALT1 of Arabidopsis thaliana (Mouse-ear cress).